The sequence spans 382 residues: Protein delta homolog 2 (382 aa).

The signal sequence occupies residues 1–26 (MPSGCRCLNLVCLLCILGATSQPARA). EGF-like domains are found at residues 27–58 (DDCSSHCDLAHGCCAPDGSCRCDPGWEGLHCE), 62–89 (RMPGCQHGTCHQPWQCICHSGWAGKFCD), 91–129 (DEHICTSQSPCQNGGQCVYDGGGEYHCVCLPGFHGRGCE), and 131–172 (KAGP…AHCE). Residues 27–305 (DDCSSHCDLA…RQESGLGESS (279 aa)) are Extracellular-facing. Cystine bridges form between cysteine 29–cysteine 40, cysteine 33–cysteine 46, cysteine 48–cysteine 57, cysteine 66–cysteine 71, cysteine 79–cysteine 88, cysteine 95–cysteine 107, cysteine 101–cysteine 117, cysteine 119–cysteine 128, cysteine 135–cysteine 148, cysteine 142–cysteine 160, cysteine 162–cysteine 171, cysteine 178–cysteine 189, cysteine 183–cysteine 198, cysteine 200–cysteine 209, cysteine 216–cysteine 227, cysteine 221–cysteine 236, and cysteine 238–cysteine 247. An N-linked (GlcNAc...) asparagine glycan is attached at asparagine 157. The 37-residue stretch at 174-210 (NVDDCLMRPCANGATCIDGINRFSCLCPEGFAGRFCT) folds into the EGF-like 5; calcium-binding domain. One can recognise an EGF-like 6; calcium-binding domain in the interval 212–248 (NLDDCASRPCQRGARCRDRVHDFDCLCPSGYGGKTCE). Residues 306–326 (LVALVVFGSLTAALVLATVLL) traverse the membrane as a helical segment. Residues 327 to 382 (TLRAWRRGICPTGPCCYPAPHYAPARQDQECQVSMLPAGFPLSPDLPPEPGKTTAL) are Cytoplasmic-facing.

Detected in a number of tissues including lung, brain, adrenal gland, testis, adult liver, placenta, ovary and thymus. Not detected in fetal liver or in adult spleen, muscle and heart.

Its subcellular location is the membrane. Functionally, regulates adipogenesis. This is Protein delta homolog 2 (Dlk2) from Mus musculus (Mouse).